A 510-amino-acid chain; its full sequence is ATP synthase subunit alpha (510 aa).

Residue 169–176 (GDRQTGKT) participates in ATP binding.

The protein belongs to the ATPase alpha/beta chains family. As to quaternary structure, F-type ATPases have 2 components, CF(1) - the catalytic core - and CF(0) - the membrane proton channel. CF(1) has five subunits: alpha(3), beta(3), gamma(1), delta(1), epsilon(1). CF(0) has four main subunits: a(1), b(1), b'(1) and c(9-12).

It localises to the cell inner membrane. It carries out the reaction ATP + H2O + 4 H(+)(in) = ADP + phosphate + 5 H(+)(out). Produces ATP from ADP in the presence of a proton gradient across the membrane. The alpha chain is a regulatory subunit. In Rhodopseudomonas palustris (strain BisB18), this protein is ATP synthase subunit alpha.